The following is a 393-amino-acid chain: Succinate--CoA ligase [ADP-forming] subunit beta (393 aa).

The region spanning 9–237 (RDLFAKHGVP…KDAANPLEAA (229 aa)) is the ATP-grasp domain. ATP-binding positions include K45, 52–54 (GRG), E92, P95, and E100. N192 and D206 together coordinate Mg(2+). Substrate-binding positions include N257 and 319-321 (GIT).

This sequence belongs to the succinate/malate CoA ligase beta subunit family. As to quaternary structure, heterotetramer of two alpha and two beta subunits. Mg(2+) serves as cofactor.

It catalyses the reaction succinate + ATP + CoA = succinyl-CoA + ADP + phosphate. The catalysed reaction is GTP + succinate + CoA = succinyl-CoA + GDP + phosphate. Its pathway is carbohydrate metabolism; tricarboxylic acid cycle; succinate from succinyl-CoA (ligase route): step 1/1. Functionally, succinyl-CoA synthetase functions in the citric acid cycle (TCA), coupling the hydrolysis of succinyl-CoA to the synthesis of either ATP or GTP and thus represents the only step of substrate-level phosphorylation in the TCA. The beta subunit provides nucleotide specificity of the enzyme and binds the substrate succinate, while the binding sites for coenzyme A and phosphate are found in the alpha subunit. The protein is Succinate--CoA ligase [ADP-forming] subunit beta of Streptomyces griseus subsp. griseus (strain JCM 4626 / CBS 651.72 / NBRC 13350 / KCC S-0626 / ISP 5235).